A 325-amino-acid chain; its full sequence is Beta-ketoacyl-[acyl-carrier-protein] synthase III (325 aa).

Residues C116 and H252 contribute to the active site. Positions 253–257 are ACP-binding; that stretch reads QANLR. The active site involves N282.

This sequence belongs to the thiolase-like superfamily. FabH family. Homodimer.

The protein resides in the cytoplasm. The enzyme catalyses malonyl-[ACP] + acetyl-CoA + H(+) = 3-oxobutanoyl-[ACP] + CO2 + CoA. The protein operates within lipid metabolism; fatty acid biosynthesis. In terms of biological role, catalyzes the condensation reaction of fatty acid synthesis by the addition to an acyl acceptor of two carbons from malonyl-ACP. Catalyzes the first condensation reaction which initiates fatty acid synthesis and may therefore play a role in governing the total rate of fatty acid production. Possesses both acetoacetyl-ACP synthase and acetyl transacylase activities. Its substrate specificity determines the biosynthesis of branched-chain and/or straight-chain of fatty acids. This Xanthomonas campestris pv. campestris (strain ATCC 33913 / DSM 3586 / NCPPB 528 / LMG 568 / P 25) protein is Beta-ketoacyl-[acyl-carrier-protein] synthase III.